The primary structure comprises 216 residues: MESRLTEREEMVRWQIEARGVKNPRVLQAMRSVPRHLFVPEPYAREAYQDYPLPIGNDQTISQPYIVAVMTELLSPEKGDLILEIGTGSGYQAAILVACGASVISIERIPAVADLAKRNLTRAGIRNVLVLCQDGTQGYAEKAPYNGILITAATPALPEPLLEELADGGRLVAPVGDRDIQELTRVTRNKDEYHTERFGAVRFVPLIGMYGWKKEW.

Residue S62 is part of the active site.

It belongs to the methyltransferase superfamily. L-isoaspartyl/D-aspartyl protein methyltransferase family.

The protein localises to the cytoplasm. It catalyses the reaction [protein]-L-isoaspartate + S-adenosyl-L-methionine = [protein]-L-isoaspartate alpha-methyl ester + S-adenosyl-L-homocysteine. Functionally, catalyzes the methyl esterification of L-isoaspartyl residues in peptides and proteins that result from spontaneous decomposition of normal L-aspartyl and L-asparaginyl residues. It plays a role in the repair and/or degradation of damaged proteins. The chain is Protein-L-isoaspartate O-methyltransferase from Methanospirillum hungatei JF-1 (strain ATCC 27890 / DSM 864 / NBRC 100397 / JF-1).